The sequence spans 125 residues: Large ribosomal subunit protein bL12 (125 aa).

This sequence belongs to the bacterial ribosomal protein bL12 family. Homodimer. Part of the ribosomal stalk of the 50S ribosomal subunit. Forms a multimeric L10(L12)X complex, where L10 forms an elongated spine to which 2 to 4 L12 dimers bind in a sequential fashion. Binds GTP-bound translation factors.

Functionally, forms part of the ribosomal stalk which helps the ribosome interact with GTP-bound translation factors. Is thus essential for accurate translation. The polypeptide is Large ribosomal subunit protein bL12 (Thermus thermophilus (strain ATCC BAA-163 / DSM 7039 / HB27)).